The sequence spans 73 residues: RNA-binding protein Hfq (73 aa).

The region spanning 8-68 is the Sm domain; the sequence is DQFLNQIRKD…ISTFAPQKNV (61 aa).

Belongs to the Hfq family. In terms of assembly, homohexamer.

In terms of biological role, RNA chaperone that binds small regulatory RNA (sRNAs) and mRNAs to facilitate mRNA translational regulation in response to envelope stress, environmental stress and changes in metabolite concentrations. Also binds with high specificity to tRNAs. The sequence is that of RNA-binding protein Hfq from Bacillus velezensis (strain DSM 23117 / BGSC 10A6 / LMG 26770 / FZB42) (Bacillus amyloliquefaciens subsp. plantarum).